The primary structure comprises 192 residues: Glycerol-3-phosphate acyltransferase (192 aa).

5 helical membrane-spanning segments follow: residues 3–23, 51–71, 80–100, 112–132, and 149–169; these read ALFL…EVIA, YGVL…LIAV, VLTF…FFGF, VVFA…LGIF, and AFLF…AIVI.

It belongs to the PlsY family. In terms of assembly, probably interacts with PlsX.

It localises to the cell inner membrane. It carries out the reaction an acyl phosphate + sn-glycerol 3-phosphate = a 1-acyl-sn-glycero-3-phosphate + phosphate. It participates in lipid metabolism; phospholipid metabolism. Functionally, catalyzes the transfer of an acyl group from acyl-phosphate (acyl-PO(4)) to glycerol-3-phosphate (G3P) to form lysophosphatidic acid (LPA). This enzyme utilizes acyl-phosphate as fatty acyl donor, but not acyl-CoA or acyl-ACP. This Aquifex aeolicus (strain VF5) protein is Glycerol-3-phosphate acyltransferase.